A 231-amino-acid polypeptide reads, in one-letter code: Protein OPG061 (231 aa).

It belongs to the orthopoxvirus OPG058 family.

Its subcellular location is the host nucleus. It localises to the host nucleolus. The chain is Protein OPG061 (OPG061) from Vaccinia virus (strain L-IVP) (VACV).